A 448-amino-acid polypeptide reads, in one-letter code: Guanine deaminase (448 aa).

Zn(2+) is bound by residues histidine 74 and histidine 76. Residues 76-79 (HAPQ), 204-205 (RF), 231-234 (HISE), and aspartate 319 contribute to the substrate site. Histidine 231 and aspartate 319 together coordinate Zn(2+).

Belongs to the metallo-dependent hydrolases superfamily. ATZ/TRZ family. The cofactor is Zn(2+).

The enzyme catalyses guanine + H2O + H(+) = xanthine + NH4(+). It participates in purine metabolism; guanine degradation; xanthine from guanine: step 1/1. With respect to regulation, strongly inhibited by p-chloromercuribenzoate (PCMB). Potassium cyanide (KCN) strongly inhibits activity towards 7,8-dihydropterin but has almost no effect on activity towards guanine. Pterin inhibits activity towards guanine but has little effect on activity towards 7,8-dihydropterin. Functionally, catalyzes the hydrolytic deamination of guanine, producing xanthine and ammonia. Also has 7,8-dihydropterin deaminase activity, which plays a role in synthesis of the red eye pigment aurodrosopterin. The polypeptide is Guanine deaminase (Drosophila melanogaster (Fruit fly)).